The following is a 504-amino-acid chain: Anaerobic nitric oxide reductase transcription regulator NorR (504 aa).

At Asp57 the chain carries 4-aspartylphosphate. The region spanning Met187 to Val416 is the Sigma-54 factor interaction domain. ATP-binding positions include Gly215–Glu222 and Ala278–Glu287. The H-T-H motif DNA-binding region spans Trp479–Lys498.

It functions in the pathway nitrogen metabolism; nitric oxide reduction. Required for the expression of anaerobic nitric oxide (NO) reductase, acts as a transcriptional activator for at least the norVW operon. Activation also requires sigma-54. The sequence is that of Anaerobic nitric oxide reductase transcription regulator NorR from Escherichia coli O139:H28 (strain E24377A / ETEC).